The chain runs to 380 residues: Erythronate-4-phosphate dehydrogenase (380 aa).

Substrate contacts are provided by Ser-45 and Thr-66. NAD(+) contacts are provided by residues 126 to 127, Asp-146, Thr-175, 206 to 208, and Asp-232; these read QV and ASR. Arg-208 is a catalytic residue. Glu-237 is a catalytic residue. The active-site Proton donor is His-254. Gly-257 serves as a coordination point for NAD(+). A substrate-binding site is contributed by Tyr-258.

Belongs to the D-isomer specific 2-hydroxyacid dehydrogenase family. PdxB subfamily. As to quaternary structure, homodimer.

The protein localises to the cytoplasm. The enzyme catalyses 4-phospho-D-erythronate + NAD(+) = (R)-3-hydroxy-2-oxo-4-phosphooxybutanoate + NADH + H(+). It participates in cofactor biosynthesis; pyridoxine 5'-phosphate biosynthesis; pyridoxine 5'-phosphate from D-erythrose 4-phosphate: step 2/5. Functionally, catalyzes the oxidation of erythronate-4-phosphate to 3-hydroxy-2-oxo-4-phosphonooxybutanoate. The polypeptide is Erythronate-4-phosphate dehydrogenase (Pseudomonas paraeruginosa (strain DSM 24068 / PA7) (Pseudomonas aeruginosa (strain PA7))).